The chain runs to 490 residues: Cytochrome P450 71A19 (490 aa).

The chain crosses the membrane as a helical span at residues 3 to 23 (IILVTLCLTTLLALLLLKSIL). Cysteine 433 is a heme binding site.

The protein belongs to the cytochrome P450 family. Requires heme as cofactor.

The protein resides in the membrane. This chain is Cytochrome P450 71A19 (CYP71A19), found in Arabidopsis thaliana (Mouse-ear cress).